The primary structure comprises 209 residues: Holliday junction branch migration complex subunit RuvA (209 aa).

A domain I region spans residues 1–64; it reads MIGRIRGMLI…EDAQSLYGFA (64 aa). Residues 65–143 form a domain II region; the sequence is SRLDRNLFRL…QLEGQFVPSQ (79 aa). Residues 144–157 form a flexible linker region; sequence PDVPTGAGAATASQ. The tract at residues 158–209 is domain III; sequence AGPDPREEAEAALIALGYKPQEAAKAISKVAGPDMNSETLIRLALKNMIPAG.

The protein belongs to the RuvA family. Homotetramer. Forms an RuvA(8)-RuvB(12)-Holliday junction (HJ) complex. HJ DNA is sandwiched between 2 RuvA tetramers; dsDNA enters through RuvA and exits via RuvB. An RuvB hexamer assembles on each DNA strand where it exits the tetramer. Each RuvB hexamer is contacted by two RuvA subunits (via domain III) on 2 adjacent RuvB subunits; this complex drives branch migration. In the full resolvosome a probable DNA-RuvA(4)-RuvB(12)-RuvC(2) complex forms which resolves the HJ.

Its subcellular location is the cytoplasm. In terms of biological role, the RuvA-RuvB-RuvC complex processes Holliday junction (HJ) DNA during genetic recombination and DNA repair, while the RuvA-RuvB complex plays an important role in the rescue of blocked DNA replication forks via replication fork reversal (RFR). RuvA specifically binds to HJ cruciform DNA, conferring on it an open structure. The RuvB hexamer acts as an ATP-dependent pump, pulling dsDNA into and through the RuvAB complex. HJ branch migration allows RuvC to scan DNA until it finds its consensus sequence, where it cleaves and resolves the cruciform DNA. The chain is Holliday junction branch migration complex subunit RuvA from Marinobacter nauticus (strain ATCC 700491 / DSM 11845 / VT8) (Marinobacter aquaeolei).